The chain runs to 623 residues: MNNGGPTEMYYQQHMQSAGQPQQPQTVTSGPMSHYPPAQPPLLQPGQPYSHGAPSPYQYGYANGMASPSGGPVPSNLPSNQPVLPLPGVGGQGAMPAHYSFDTTGQHPPPGMKPRVTATLWEDEGSLCFQVEARGICVARREDNHMINGTKLLNVAGMTRGRRDGILKSEKVRHVVKIGPMHLKGVWIPYERALDFANKEKITELLYPLFVHNIGALLYHPTNQTRTSQVMAAAERRKQDQGQMRTPPAGLPSIQHQPHNSMALPGPQSSLPSNNMARPPLDRAATFPTPPTTASSVMPNMGSTDNFNWQGQSMNGNQGTNAIAIDANLGHARSMPTTPATTPPGSMQPYGSAQSFDGSRQQMYNAPSQQSPYPASNGAHDRMYGQGNSYAKNDMGPPSSRPSGSAPSGEHEHKGSNGILPSEHGHQSHAGEEDGEHEQHDAEYTHDSGAYDSNRPSYNYTAPGVGSLAGDANNVDPSMTGSPNHPPASGRATPRTAAQPQPYYHNSGYGASPRVQQAPGFYNGVGGDRPAVNGGSGSDVYAPPADMANPMPNGYAPAPQVPNGVSGVKRGREGDDDLSRPVGDVPGMDMKRRKTLESSMPAPPFDSMSGRTAPTIGGDPRQR.

A compositionally biased stretch (polar residues) spans 13 to 31; sequence QHMQSAGQPQQPQTVTSGP. Positions 13–111 are disordered; the sequence is QHMQSAGQPQ…DTTGQHPPPG (99 aa). One can recognise an HTH APSES-type domain in the interval 115-221; the sequence is RVTATLWEDE…HNIGALLYHP (107 aa). The segment at residues 149–170 is a DNA-binding region (H-T-H motif); that stretch reads GTKLLNVAGMTRGRRDGILKSE. Disordered regions lie at residues 232–270 and 332–623; these read AAAE…PQSS and ARSM…PRQR. Over residues 335–374 the composition is skewed to polar residues; the sequence is MPTTPATTPPGSMQPYGSAQSFDGSRQQMYNAPSQQSPYP. Positions 396–408 are enriched in low complexity; the sequence is GPPSSRPSGSAPS. The segment covering 423–446 has biased composition (basic and acidic residues); it reads EHGHQSHAGEEDGEHEQHDAEYTH. The segment covering 542-553 has biased composition (low complexity); it reads APPADMANPMPN. Positions 569–594 are nuclear localization domain; it reads KRGREGDDDLSRPVGDVPGMDMKRRK. The segment covering 570-579 has biased composition (basic and acidic residues); that stretch reads RGREGDDDLS.

The protein belongs to the EFG1/PHD1/stuA family.

The protein localises to the nucleus. Transcription factor that regulates asexual reproduction. Binds the StuA-response elements (StRE) with the consensus sequence 5'-(A/T)CGCG(T/A)N(A/C)-3' at the promoters of target genes. Controls conidiation by positively regulating the expression of brlA and abaA. Positively regulates the cephalosporin biosynthesis gene cluster. Also involved hyphal fragmentation and cell wall integrity. This is Cell pattern formation-associated protein stuA from Hapsidospora chrysogenum (strain ATCC 11550 / CBS 779.69 / DSM 880 / IAM 14645 / JCM 23072 / IMI 49137) (Acremonium chrysogenum).